A 387-amino-acid polypeptide reads, in one-letter code: Deoxyguanosinetriphosphate triphosphohydrolase-like protein (387 aa).

Positions 78 to 209 constitute an HD domain; the sequence is RLTHSLEVAQ…ANLADEVAYN (132 aa).

This sequence belongs to the dGTPase family. Type 2 subfamily.

The polypeptide is Deoxyguanosinetriphosphate triphosphohydrolase-like protein (Ralstonia nicotianae (strain ATCC BAA-1114 / GMI1000) (Ralstonia solanacearum)).